A 242-amino-acid polypeptide reads, in one-letter code: Pyridoxine 5'-phosphate synthase (242 aa).

Asn-6 is a binding site for 3-amino-2-oxopropyl phosphate. Position 8–9 (8–9) interacts with 1-deoxy-D-xylulose 5-phosphate; that stretch reads DH. Residue Arg-17 participates in 3-amino-2-oxopropyl phosphate binding. The Proton acceptor role is filled by His-42. Arg-44 and His-49 together coordinate 1-deoxy-D-xylulose 5-phosphate. Glu-69 acts as the Proton acceptor in catalysis. Residue Thr-99 coordinates 1-deoxy-D-xylulose 5-phosphate. The Proton donor role is filled by His-190. 3-amino-2-oxopropyl phosphate contacts are provided by residues Gly-191 and 212–213; that span reads GH.

Belongs to the PNP synthase family. Homooctamer; tetramer of dimers.

It is found in the cytoplasm. The enzyme catalyses 3-amino-2-oxopropyl phosphate + 1-deoxy-D-xylulose 5-phosphate = pyridoxine 5'-phosphate + phosphate + 2 H2O + H(+). It functions in the pathway cofactor biosynthesis; pyridoxine 5'-phosphate biosynthesis; pyridoxine 5'-phosphate from D-erythrose 4-phosphate: step 5/5. Catalyzes the complicated ring closure reaction between the two acyclic compounds 1-deoxy-D-xylulose-5-phosphate (DXP) and 3-amino-2-oxopropyl phosphate (1-amino-acetone-3-phosphate or AAP) to form pyridoxine 5'-phosphate (PNP) and inorganic phosphate. This chain is Pyridoxine 5'-phosphate synthase, found in Neisseria meningitidis serogroup C.